Reading from the N-terminus, the 301-residue chain is Probable alpha-L-glutamate ligase (301 aa).

Positions 104–287 (LQLLSRKGIG…VAGMIVEFIE (184 aa)) constitute an ATP-grasp domain. ATP is bound by residues lysine 141, 178 to 179 (EF), aspartate 187, and 211 to 213 (RSN). Aspartate 248, glutamate 260, and asparagine 262 together coordinate Mg(2+). Mn(2+)-binding residues include aspartate 248, glutamate 260, and asparagine 262.

The protein belongs to the RimK family. Mg(2+) serves as cofactor. It depends on Mn(2+) as a cofactor.

The sequence is that of Probable alpha-L-glutamate ligase from Teredinibacter turnerae (strain ATCC 39867 / T7901).